A 140-amino-acid chain; its full sequence is Thymic stromal lymphopoietin (140 aa).

A signal peptide spans methionine 1–threonine 19. 2 N-linked (GlcNAc...) asparagine glycosylation sites follow: asparagine 21 and asparagine 26. 3 disulfide bridges follow: cysteine 25/cysteine 98, cysteine 57/cysteine 63, and cysteine 78/cysteine 121. Asparagine 123 is a glycosylation site (N-linked (GlcNAc...) asparagine).

Interacts with a receptor composed of CRLF2 and IL7R. Binding of TSLP to CRLF2/TSLPR is a mechanistic prerequisite for recruitment of IL7R to the high-affinity ternary complex.

The protein localises to the secreted. Cytokine that induces the release of T-cell-attracting chemokines from monocytes and, in particular, enhances the maturation of CD11c(+) dendritic cells. Can induce allergic inflammation by directly activating mast cells. The sequence is that of Thymic stromal lymphopoietin (Tslp) from Mus musculus (Mouse).